The following is a 115-amino-acid chain: NADH-ubiquinone oxidoreductase chain 3 (115 aa).

3 consecutive transmembrane segments (helical) span residues 3–23 (FVLA…ITFW), 55–75 (FFLV…LLPL), and 84–104 (LPLM…GLTY).

The protein belongs to the complex I subunit 3 family. As to quaternary structure, core subunit of respiratory chain NADH dehydrogenase (Complex I) which is composed of 45 different subunits. Interacts with TMEM186. Interacts with TMEM242.

The protein resides in the mitochondrion inner membrane. The enzyme catalyses a ubiquinone + NADH + 5 H(+)(in) = a ubiquinol + NAD(+) + 4 H(+)(out). Functionally, core subunit of the mitochondrial membrane respiratory chain NADH dehydrogenase (Complex I) which catalyzes electron transfer from NADH through the respiratory chain, using ubiquinone as an electron acceptor. Essential for the catalytic activity of complex I. The chain is NADH-ubiquinone oxidoreductase chain 3 from Pongo abelii (Sumatran orangutan).